The sequence spans 688 residues: MSDGPETAEGDTDDAVQDAAVNSRVASESSARSQPRATVVGCLPPTPFAIHTTPAPSEHSKEKNVSRRLPTEKTPSRLATPQFPPTPVSSRGSIAEPSAYPSITQALRSCLPPQKDIEILLSNLSSMSIFCYKSSFKLCSSWPSEMTEEQIPIANLLYSETHPVLLARHMLLFAVGLQHLSPTKAIPGLTRHHRAIMEQLADSAIKLVNTDDVLLGTLEGLENLILESFYHIDGGNIRRAWITMRRAVMTAQLLGLHRPGHYRFKTVNKQNDLDPAVMWACIVSTEQFLCLLLGLPTSTSGASFTIPRATSACVESGNLPVLIPDVVRKIIERNQTHVPQEALDMTQKIDHELLGVVKQWPPAFWRPLQLSGLEVDSADAFWETRRAWDHIFYYSLVNQLHLPYMLNPSHVSQKVYSRIACASASREILIRQIAIRTFNPVTAGCRMGDFVALIAGMTLMLAHILSHCSKGTENLLVHQRVGDRATVERALECMESMSEQHEDILTAKCAALLKNLLDIEAGPAEARSDDGQKDDQNVLVVKVPHVGAIKIARDGISITPFDTEQEQVSHDGVTIGGFGSIHVSTPHDSDRDGDHQADVVTPNDTASQATTQVVRPASARKQWRPVSQRSSGDVFTLPEETFPDASAGMEEWLFQGLDTAFFDVLISGAGEQPLNSTDTEGWNFVMSP.

Over residues 1–16 the composition is skewed to acidic residues; it reads MSDGPETAEGDTDDAV. The disordered stretch occupies residues 1–95; the sequence is MSDGPETAEG…TPVSSRGSIA (95 aa). A compositionally biased stretch (polar residues) spans 24–36; the sequence is RVASESSARSQPR. Basic and acidic residues predominate over residues 58 to 75; it reads EHSKEKNVSRRLPTEKTP.

It is found in the nucleus. Its function is as follows. Probable transcription factor that regulates expression of the gene cluster that mediates the biosynthesis of Griseofulvin, an important antifungal drug that has been in use for a long time for treating dermatophyte infections. This Penicillium aethiopicum protein is Probable transcription factor gsfR1.